Here is a 569-residue protein sequence, read N- to C-terminus: S-(+)-linalool synthase, chloroplastic (569 aa).

Residues 1–39 (MALIATKISSRSCFVSAYPNNSPTFLISKFPNTVDSLSP) constitute a chloroplast transit peptide. Positions 294, 331, 335, 472, and 475 each coordinate (2E)-geranyl diphosphate. Asp-331 and Asp-335 together coordinate Mg(2+). Residues 331–335 (DDIFD) carry the DDXXD motif motif. Mg(2+) is bound by residues Asp-475, Ser-479, and Glu-483.

The protein belongs to the terpene synthase family. Tpsb subfamily. Requires Mg(2+) as cofactor. Mn(2+) serves as cofactor. As to expression, predominantly expressed in flowers but also in stems and siliques.

Its subcellular location is the plastid. The protein localises to the chloroplast. It carries out the reaction (2E)-geranyl diphosphate + H2O = (S)-linalool + diphosphate. It functions in the pathway secondary metabolite biosynthesis; terpenoid biosynthesis. In terms of biological role, involved in monoterpene (C10) biosynthesis. The major product is (S)-linalool. The sequence is that of S-(+)-linalool synthase, chloroplastic from Arabidopsis thaliana (Mouse-ear cress).